Consider the following 307-residue polypeptide: D-alanine--D-alanine ligase (307 aa).

The 194-residue stretch at 108–301 folds into the ATP-grasp domain; that stretch reads KEVFAAAGLP…FPEFCAWLVE (194 aa). ATP is bound at residue 135 to 185; that stretch reads LPPPYVVKPNAEGSSVGVYIVHEDANGPPQLAADMPQDLMVETYVPGRELT. Mg(2+)-binding residues include aspartate 252, glutamate 268, and asparagine 270.

It belongs to the D-alanine--D-alanine ligase family. It depends on Mg(2+) as a cofactor. Mn(2+) is required as a cofactor.

It is found in the cytoplasm. The catalysed reaction is 2 D-alanine + ATP = D-alanyl-D-alanine + ADP + phosphate + H(+). It functions in the pathway cell wall biogenesis; peptidoglycan biosynthesis. Its function is as follows. Cell wall formation. The protein is D-alanine--D-alanine ligase of Cereibacter sphaeroides (strain ATCC 17029 / ATH 2.4.9) (Rhodobacter sphaeroides).